The following is a 1045-amino-acid chain: B3 domain-containing protein REM13 (1045 aa).

The TF-B3 1 DNA-binding region spans 7 to 96 (YPQFFHTLVP…VFHVSNLGPN (90 aa)). The disordered stretch occupies residues 121-147 (NNGDVCDSEELPKEKKAKTNSEEADAV). Residues 130–141 (ELPKEKKAKTNS) are compositionally biased toward basic and acidic residues. 2 DNA-binding regions (TF-B3) span residues 157-253 (CFMA…FCPT) and 305-398 (FVTF…CSPE). The segment at 423–449 (NRDKISNNDKEENMSWERKKDHLKSRD) is disordered. Residues 474–570 (SNDSCLVVVS…TPVLSLCPAD (97 aa)) constitute a DNA-binding region (TF-B3 4). The segment at 606-625 (IKDDNSKEKNDKEESKSVDG) is disordered. DNA-binding regions (TF-B3) lie at residues 643-738 (FVTL…LRTE), 815-910 (FVTF…LRTK), and 940-1035 (FVTL…LKFS).

The protein localises to the nucleus. In Arabidopsis thaliana (Mouse-ear cress), this protein is B3 domain-containing protein REM13 (REM13).